A 244-amino-acid chain; its full sequence is MTTKNTSGRGQRELRVRVKTAKGRKLSSTLWLERQLNDPYVIRAKKEGYRGRAAYKILELDDKFGFLKPGGRVVDLGCAPGGWCQVAVERVNALGQKKNKPEGTVLGVDLQEVEPISGAEIHQLDFLSDDADEKVKGWLGGRADVVMSDMAAAASGHKGTDHLRIIALCEAAAAFAFDVLEEGGTFVAKVLAGGAENELQALLKKNFTKVANVKPPASRADSSEKFVVAMGFRGRASEPEEGEA.

The S-adenosyl-L-methionine site is built by glycine 81, tryptophan 83, aspartate 109, aspartate 125, and aspartate 149. Catalysis depends on lysine 189, which acts as the Proton acceptor.

This sequence belongs to the class I-like SAM-binding methyltransferase superfamily. RNA methyltransferase RlmE family.

It localises to the cytoplasm. The enzyme catalyses uridine(2552) in 23S rRNA + S-adenosyl-L-methionine = 2'-O-methyluridine(2552) in 23S rRNA + S-adenosyl-L-homocysteine + H(+). Specifically methylates the uridine in position 2552 of 23S rRNA at the 2'-O position of the ribose in the fully assembled 50S ribosomal subunit. The sequence is that of Ribosomal RNA large subunit methyltransferase E from Cereibacter sphaeroides (strain ATCC 17023 / DSM 158 / JCM 6121 / CCUG 31486 / LMG 2827 / NBRC 12203 / NCIMB 8253 / ATH 2.4.1.) (Rhodobacter sphaeroides).